Here is a 228-residue protein sequence, read N- to C-terminus: 2,3-bisphosphoglycerate-dependent phosphoglycerate mutase (228 aa).

Substrate is bound by residues 8–15, 21–22, Arg-60, 87–90, Lys-98, 114–115, and 180–181; these read RHGQSEWN, TG, ERHY, RR, and GN. His-9 (tele-phosphohistidine intermediate) is an active-site residue. The active-site Proton donor/acceptor is the Glu-87.

Belongs to the phosphoglycerate mutase family. BPG-dependent PGAM subfamily. As to quaternary structure, homodimer.

The catalysed reaction is (2R)-2-phosphoglycerate = (2R)-3-phosphoglycerate. The protein operates within carbohydrate degradation; glycolysis; pyruvate from D-glyceraldehyde 3-phosphate: step 3/5. Functionally, catalyzes the interconversion of 2-phosphoglycerate and 3-phosphoglycerate. This chain is 2,3-bisphosphoglycerate-dependent phosphoglycerate mutase, found in Zymomonas mobilis subsp. mobilis (strain ATCC 31821 / ZM4 / CP4).